Reading from the N-terminus, the 435-residue chain is IAA-amino acid hydrolase ILR1-like 5 (435 aa).

The first 25 residues, Met1 to Ser25, serve as a signal peptide directing secretion. Positions 134, 136, 170, 194, and 397 each coordinate Mn(2+). Residues Lys432–Leu435 carry the Prevents secretion from ER motif.

This sequence belongs to the peptidase M20 family.

It is found in the endoplasmic reticulum lumen. Hydrolyzes certain amino acid conjugates of the plant growth regulator indole-3-acetic acid (IAA). In Arabidopsis thaliana (Mouse-ear cress), this protein is IAA-amino acid hydrolase ILR1-like 5.